Reading from the N-terminus, the 290-residue chain is 33 kDa chaperonin (290 aa).

2 cysteine pairs are disulfide-bonded: Cys-235-Cys-237 and Cys-268-Cys-271.

This sequence belongs to the HSP33 family. In terms of processing, under oxidizing conditions two disulfide bonds are formed involving the reactive cysteines. Under reducing conditions zinc is bound to the reactive cysteines and the protein is inactive.

Its subcellular location is the cytoplasm. Redox regulated molecular chaperone. Protects both thermally unfolding and oxidatively damaged proteins from irreversible aggregation. Plays an important role in the bacterial defense system toward oxidative stress. The polypeptide is 33 kDa chaperonin (Streptococcus pneumoniae (strain JJA)).